Consider the following 121-residue polypeptide: Large ribosomal subunit protein bL12 (121 aa).

Belongs to the bacterial ribosomal protein bL12 family. In terms of assembly, homodimer. Part of the ribosomal stalk of the 50S ribosomal subunit. Forms a multimeric L10(L12)X complex, where L10 forms an elongated spine to which 2 to 4 L12 dimers bind in a sequential fashion. Binds GTP-bound translation factors.

Functionally, forms part of the ribosomal stalk which helps the ribosome interact with GTP-bound translation factors. Is thus essential for accurate translation. In Streptococcus equi subsp. equi (strain 4047), this protein is Large ribosomal subunit protein bL12.